Here is a 155-residue protein sequence, read N- to C-terminus: uncharacterized protein (155 aa).

The SCP domain occupies 37-140; it reads IAELRKKLNL…GGYRLKTTDN (104 aa).

This is an uncharacterized protein from Borreliella burgdorferi (strain ATCC 35210 / DSM 4680 / CIP 102532 / B31) (Borrelia burgdorferi).